Reading from the N-terminus, the 89-residue chain is MAITQERKNEIISEYKVHETDTGSPEVQIAVLTEEITSLNEHLRVHKKDHHSRRGLLKMVGKRRNLLTYLRNKDVTRYRELIKKLGLRR.

It belongs to the universal ribosomal protein uS15 family. Part of the 30S ribosomal subunit. Forms a bridge to the 50S subunit in the 70S ribosome, contacting the 23S rRNA.

Its function is as follows. One of the primary rRNA binding proteins, it binds directly to 16S rRNA where it helps nucleate assembly of the platform of the 30S subunit by binding and bridging several RNA helices of the 16S rRNA. Functionally, forms an intersubunit bridge (bridge B4) with the 23S rRNA of the 50S subunit in the ribosome. The chain is Small ribosomal subunit protein uS15 from Oceanobacillus iheyensis (strain DSM 14371 / CIP 107618 / JCM 11309 / KCTC 3954 / HTE831).